The following is a 78-amino-acid chain: Large ribosomal subunit protein eL20 (78 aa).

This sequence belongs to the eukaryotic ribosomal protein eL20 family. In terms of assembly, part of the 50S ribosomal subunit. Binds 23S rRNA.

The protein is Large ribosomal subunit protein eL20 of Pyrobaculum arsenaticum (strain DSM 13514 / JCM 11321 / PZ6).